The following is a 724-amino-acid chain: Hyperosmolality-gated Ca2+ permeable channel 3.1 (724 aa).

Residues 1–4 (MEFG) lie on the Extracellular side of the membrane. The chain crosses the membrane as a helical span at residues 5 to 25 (SFLVSLGTSFVIFVILMLLFT). The Cytoplasmic segment spans residues 26 to 85 (WLSRKSGNAPIYYPNRILKGLEPWEGTSLTRNPFAWMREALTSSEQDVVNLSGVDTAVHF). Residues 86 to 108 (VFLSTVLGIFACSSLLLLPTLLP) form a helical membrane-spanning segment. Topologically, residues 109-147 (LAATDNNIKNTKNATDTTSKGTFSQLDNLSMANITKKSS) are extracellular. The helical transmembrane segment at 148 to 170 (RLWAFLGAVYWISLVTYFFLWKA) threads the bilayer. At 171–358 (YKHVSSLRAQ…WQNLNIKLFS (188 aa)) the chain is on the cytoplasmic side. A coiled-coil region spans residues 241–309 (EKLEGYKKKL…KAVLAEKQQT (69 aa)). Residues 359 to 385 (RIIRQYFIYFFVAVTILFYMIPIAFVS) traverse the membrane as a helical segment. At 386–411 (AITTLKNLQRIIPFIKPVVEITAIRT) the chain is on the extracellular side. The chain crosses the membrane as a helical span at residues 412–439 (VLESFLPQIALIVFLAMLPKLLLFLSKA). The Cytoplasmic segment spans residues 440-448 (EGIPSQSHA). The chain crosses the membrane as a helical span at residues 449 to 472 (IRAASGKYFYFSVFNVFIGVTLAG). Topologically, residues 473–497 (TLFNTVKDIAKNPKLDMIINLLATS) are extracellular. A helical transmembrane segment spans residues 498–529 (LPKSATFFLTYVALKFFIGYGLELSRIIPLII). Residues 530–554 (FHLKKKYLCKTEAEVKEAWYPGDLS) are Cytoplasmic-facing. The helical transmembrane segment at 555–574 (YATRVPGDMLILTITFCYSV) threads the bilayer. Isoleucine 575 is a topological domain (extracellular). A helical transmembrane segment spans residues 576-594 (APLILIFGITYFGLGWLVL). The Cytoplasmic portion of the chain corresponds to 595-612 (RNQALKVYVPSYESYGRM). Residues 613–636 (WPHIHQRILAALFLFQVVMFGYLG) traverse the membrane as a helical segment. Topologically, residues 637–641 (AKTFF) are extracellular. The chain crosses the membrane as a helical span at residues 642-662 (YTALVIPLIITSLIFGYVCRQ). Topologically, residues 663 to 724 (KFYGGFEHTA…YQDFNAIAGV (62 aa)) are cytoplasmic.

It belongs to the CSC1 (TC 1.A.17) family. In terms of assembly, homodimer.

It is found in the membrane. Functionally, acts as a hyperosmolarity-gated non-selective cation channel that permeates Ca(2+) ions. Mechanosensitive ion channel that converts mechanical stimuli into a flow of ions: activated in response to membrane stretch. Not activated in response to membrane poke. The sequence is that of Hyperosmolality-gated Ca2+ permeable channel 3.1 from Arabidopsis thaliana (Mouse-ear cress).